The chain runs to 289 residues: 4-diphosphocytidyl-2-C-methyl-D-erythritol kinase (289 aa).

Lys-11 is a catalytic residue. Pro-93–Ala-103 serves as a coordination point for ATP. The active site involves Asp-135.

Belongs to the GHMP kinase family. IspE subfamily.

The enzyme catalyses 4-CDP-2-C-methyl-D-erythritol + ATP = 4-CDP-2-C-methyl-D-erythritol 2-phosphate + ADP + H(+). It participates in isoprenoid biosynthesis; isopentenyl diphosphate biosynthesis via DXP pathway; isopentenyl diphosphate from 1-deoxy-D-xylulose 5-phosphate: step 3/6. Its function is as follows. Catalyzes the phosphorylation of the position 2 hydroxy group of 4-diphosphocytidyl-2C-methyl-D-erythritol. The polypeptide is 4-diphosphocytidyl-2-C-methyl-D-erythritol kinase (Thermoanaerobacter pseudethanolicus (strain ATCC 33223 / 39E) (Clostridium thermohydrosulfuricum)).